A 117-amino-acid polypeptide reads, in one-letter code: PBP1-interacting protein XAC1 (117 aa).

Residues 1–60 are disordered; the sequence is MSKAPSQPAKKWMSARTLAKSEDATNRKSNTAAPASQPSQQPASVMHERPTPPPPAPVQL. The span at 32–44 shows a compositional bias: low complexity; the sequence is AAPASQPSQQPAS.

In terms of assembly, forms a complex composed of at least MKT1, PBP1, XAC1 and LSM12. Forms a complex composed of at least MKT1L, PBP1, XAC1 and LSM12.

The protein localises to the cytoplasm. Functionally, involved in post-transcriptional regulation of gene expression. The polypeptide is PBP1-interacting protein XAC1 (Trypanosoma brucei brucei (strain 927/4 GUTat10.1)).